Consider the following 260-residue polypeptide: Transcription factor BEE 1 (260 aa).

The tract at residues 118–139 is disordered; the sequence is ETGSLRRGKRLKKKKEEEDEKE. Positions 151–201 constitute a bHLH domain; the sequence is QATDSHSLAERVRRGKINERLRCLQDMVPGCYKAMGMATMLDEIINYVQSL.

It localises to the nucleus. In terms of biological role, positive regulator of brassinosteroid signaling. This is Transcription factor BEE 1 (BEE1) from Arabidopsis thaliana (Mouse-ear cress).